The sequence spans 360 residues: 3-dehydroquinate synthase (360 aa).

NAD(+) is bound by residues 105 to 109 (GVVGD), 129 to 130 (TT), Lys-142, Lys-151, and 169 to 172 (TLKT). 3 residues coordinate Zn(2+): Glu-184, His-247, and His-263.

Belongs to the sugar phosphate cyclases superfamily. Dehydroquinate synthase family. Requires Co(2+) as cofactor. Zn(2+) is required as a cofactor. The cofactor is NAD(+).

It is found in the cytoplasm. It carries out the reaction 7-phospho-2-dehydro-3-deoxy-D-arabino-heptonate = 3-dehydroquinate + phosphate. The protein operates within metabolic intermediate biosynthesis; chorismate biosynthesis; chorismate from D-erythrose 4-phosphate and phosphoenolpyruvate: step 2/7. In terms of biological role, catalyzes the conversion of 3-deoxy-D-arabino-heptulosonate 7-phosphate (DAHP) to dehydroquinate (DHQ). The protein is 3-dehydroquinate synthase of Acetivibrio thermocellus (strain ATCC 27405 / DSM 1237 / JCM 9322 / NBRC 103400 / NCIMB 10682 / NRRL B-4536 / VPI 7372) (Clostridium thermocellum).